Here is a 167-residue protein sequence, read N- to C-terminus: Peptidoglycan-binding-like protein (167 aa).

A signal peptide spans Met1 to Ala24.

The protein belongs to the IagB/IpgF/P19 family.

It is found in the periplasm. In Escherichia coli O157:H7, this protein is Peptidoglycan-binding-like protein (pbl).